A 574-amino-acid polypeptide reads, in one-letter code: WAP, Kazal, immunoglobulin, Kunitz and NTR domain-containing protein 2 (574 aa).

Residues Met-1–Ala-32 form the signal peptide. Positions Arg-37 to Arg-90 constitute a WAP domain. 17 cysteine pairs are disulfide-bonded: Cys-44–Cys-77, Cys-60–Cys-81, Cys-64–Cys-76, Cys-70–Cys-86, Cys-132–Cys-162, Cys-136–Cys-155, Cys-144–Cys-173, Cys-229–Cys-285, Cys-326–Cys-376, Cys-335–Cys-359, Cys-351–Cys-372, Cys-384–Cys-434, Cys-393–Cys-417, Cys-409–Cys-430, Cys-443–Cys-513, Cys-446–Cys-515, and Cys-457–Cys-564. A Kazal-like domain is found at Trp-124–Tyr-175. Positions Pro-208–Ser-301 constitute an Ig-like C2-type domain. BPTI/Kunitz inhibitor domains are found at residues Cys-326 to Cys-376 and Cys-384 to Cys-434. The NTR domain occupies Cys-443 to Cys-564. An N-linked (GlcNAc...) asparagine glycan is attached at Asn-517.

Belongs to the WFIKKN family. As to quaternary structure, interacts with both mature and propeptide myostatin/MSTN.

It is found in the secreted. In terms of biological role, protease-inhibitor that contains multiple distinct protease inhibitor domains. Probably has serine protease- and metalloprotease-inhibitor activity. Inhibits the biological activity of mature myostatin, but not activin. The protein is WAP, Kazal, immunoglobulin, Kunitz and NTR domain-containing protein 2 (WFIKKN2) of Bos taurus (Bovine).